A 542-amino-acid chain; its full sequence is Membrane protein insertase YidC (542 aa).

5 helical membrane-spanning segments follow: residues 7-27 (LLVM…QQDF), 338-358 (FALL…IIGV), 417-437 (MGGC…YWTF), 455-475 (LSAQ…MFLL), and 494-514 (FMPV…VLYW).

The protein belongs to the OXA1/ALB3/YidC family. Type 1 subfamily. In terms of assembly, interacts with the Sec translocase complex via SecD. Specifically interacts with transmembrane segments of nascent integral membrane proteins during membrane integration.

It localises to the cell inner membrane. In terms of biological role, required for the insertion and/or proper folding and/or complex formation of integral membrane proteins into the membrane. Involved in integration of membrane proteins that insert both dependently and independently of the Sec translocase complex, as well as at least some lipoproteins. Aids folding of multispanning membrane proteins. In Actinobacillus pleuropneumoniae serotype 3 (strain JL03), this protein is Membrane protein insertase YidC.